The primary structure comprises 309 residues: ATP synthase gamma chain (309 aa).

Belongs to the ATPase gamma chain family. In terms of assembly, F-type ATPases have 2 components, CF(1) - the catalytic core - and CF(0) - the membrane proton channel. CF(1) has five subunits: alpha(3), beta(3), gamma(1), delta(1), epsilon(1). CF(0) has three main subunits: a, b and c.

It is found in the cell membrane. Produces ATP from ADP in the presence of a proton gradient across the membrane. The gamma chain is believed to be important in regulating ATPase activity and the flow of protons through the CF(0) complex. The protein is ATP synthase gamma chain of Ligilactobacillus salivarius (strain UCC118) (Lactobacillus salivarius).